We begin with the raw amino-acid sequence, 367 residues long: Chorismate synthase (367 aa).

Positions 41–60 (FTHDLQRRASGKSRHTSARR) are disordered. NADP(+) is bound by residues R48 and R54. FMN-binding positions include 125–127 (RSS), 238–239 (NA), G278, 293–297 (KPTSS), and R319.

It belongs to the chorismate synthase family. In terms of assembly, homotetramer. The cofactor is FMNH2.

The catalysed reaction is 5-O-(1-carboxyvinyl)-3-phosphoshikimate = chorismate + phosphate. It functions in the pathway metabolic intermediate biosynthesis; chorismate biosynthesis; chorismate from D-erythrose 4-phosphate and phosphoenolpyruvate: step 7/7. Functionally, catalyzes the anti-1,4-elimination of the C-3 phosphate and the C-6 proR hydrogen from 5-enolpyruvylshikimate-3-phosphate (EPSP) to yield chorismate, which is the branch point compound that serves as the starting substrate for the three terminal pathways of aromatic amino acid biosynthesis. This reaction introduces a second double bond into the aromatic ring system. The protein is Chorismate synthase of Xanthomonas axonopodis pv. citri (strain 306).